The sequence spans 357 residues: Guanine nucleotide-binding protein G(o) subunit alpha (357 aa).

Gly-2 is lipidated: N-myristoyl glycine. Cys-3 is lipidated: S-palmitoyl cysteine. The 326-residue stretch at 32–357 (KDIKLLLLGA…ANNLRGCGLY (326 aa)) folds into the G-alpha domain. The G1 motif stretch occupies residues 35–48 (KLLLLGAGESGKST). GTP-binding positions include 40-47 (GAGESGKS), 179-185 (LRTRVKT), 204-208 (DVGGQ), 273-276 (NKKD), and Ala-329. Positions 47 and 185 each coordinate Mg(2+). A G2 motif region spans residues 177–185 (DILRTRVKT). The tract at residues 200 to 209 (FKLFDVGGQR) is G3 motif. The tract at residues 269 to 276 (ILFLNKKD) is G4 motif. The tract at residues 327 to 332 (TCATDT) is G5 motif.

The protein belongs to the G-alpha family. G(i/o/t/z) subfamily. As to quaternary structure, g proteins are composed of 3 units; alpha, beta and gamma. The alpha chain contains the guanine nucleotide binding site.

Guanine nucleotide-binding proteins (G proteins) are involved as modulators or transducers in various transmembrane signaling systems. The G(o) protein function is not clear. This chain is Guanine nucleotide-binding protein G(o) subunit alpha (SCGOA), found in Mizuhopecten yessoensis (Japanese scallop).